The primary structure comprises 148 residues: UPF0179 protein VNG_1401C (148 aa).

Belongs to the UPF0179 family.

This is UPF0179 protein VNG_1401C from Halobacterium salinarum (strain ATCC 700922 / JCM 11081 / NRC-1) (Halobacterium halobium).